The chain runs to 498 residues: MTTPKKEIDRTIYDLLGIGIGPFNLGLAALCEPINDLSCLFLDAKTEFDWHPGMLINSSRLQTPFMSDLVTMADPTSRFSYLNFAKQTSRLYSFYIRENFFLPRHEYNQYCQWVSKQLSNLNFGVKVTQVNYNAGEGIYAVTAIDRRSGKPLTYLCRKLVLGTGTTPYLPDNCPIQDPRVMHSASYMQQKTYLQSQSAITVIGSGQSAAEIFYDLLQDIDIYGYQLNWMTRSPRFYPLEYTKLTLEMTSPDYVDYFHELSSEKRHRLITEQKSLYKGINAELINDIYDLLYQKRLISNIQCQLLTNVALTAIDTSGDKLKLQFKHLEQDYALDQLTSAVVLGTGYQYHLPDFIQGIKSQIEFDDHGQLAIQRDYGIDVRGDIFIQNAGLHTHGISSPDLGMGCYRNATILQAVLGYAPYPIETRIAFQTFAPCNIADAKRQPLESNTHSAVTPSKTRQGLNPSAKSVQQPSIEPQTALRIAPTGGNVSALMAPNKEAQ.

6 residues coordinate FAD: F23, D43, K45, W50, H51, and Q62. Positions 62 and 104 each coordinate NADP(+). V127 contributes to the FAD binding site. The NADP(+) site is built by S207, R231, Y275, and L309. FAD-binding residues include N386, P397, and L399. Residues 443 to 474 are compositionally biased toward polar residues; that stretch reads LESNTHSAVTPSKTRQGLNPSAKSVQQPSIEP. The interval 443 to 498 is disordered; it reads LESNTHSAVTPSKTRQGLNPSAKSVQQPSIEPQTALRIAPTGGNVSALMAPNKEAQ.

This sequence belongs to the lysine N(6)-hydroxylase/L-ornithine N(5)-oxygenase family. It depends on FAD as a cofactor.

It carries out the reaction putrescine + NADPH + O2 = N-hydroxyputrescine + NADP(+) + H2O. It functions in the pathway siderophore biosynthesis. Functionally, N-hydroxylating monooxygenase involved in the biosynthesis of the siderophore putrebactin. Catalyzes the N-hydroxylation of the aliphatic diamine putrescine into N-hydroxyputrescine (NHP). The protein is Putrescine N-hydroxylase of Shewanella oneidensis (strain ATCC 700550 / JCM 31522 / CIP 106686 / LMG 19005 / NCIMB 14063 / MR-1).